A 352-amino-acid chain; its full sequence is Nuclear receptor subfamily 1 group I member 3 (352 aa).

Residues 8–83 (LRNCVVCGDQ…AGMRKDMILS (76 aa)) constitute a DNA-binding region (nuclear receptor). Residues 11 to 31 (CVVCGDQATGYHFNALTCEGC) form an NR C4-type zinc finger. A Phosphothreonine; by PKC modification is found at T38. The NR C4-type zinc-finger motif lies at 47–71 (CPFAGSCEVSKTQRRHCPACRLQKC). Residues 109 to 352 (EQEELIRTLL…MMPLLQEICS (244 aa)) enclose the NR LBD domain.

Belongs to the nuclear hormone receptor family. NR1 subfamily. Interacts with ECT2. Heterodimer of NR1I3 and RXR. Interacts with PSMC4. Directly interacts with DNAJC7. The DNAJC7-NR1I3 complex may also include HSP90. Interacts with CRY1. Interacts with CRY2 in a ligand-dependent manner. Post-translationally, phosphorylated at Thr-38 by PKC, dephosphorylation of Thr-38 is required for nuclear translocation and activation. In terms of tissue distribution, predominantly expressed in liver.

It localises to the nucleus. The protein resides in the cytoplasm. The protein localises to the cytoskeleton. Binds and transactivates the retinoic acid response elements that control expression of the retinoic acid receptor beta 2 and alcohol dehydrogenase 3 genes. Transactivates both the phenobarbital responsive element module of the human CYP2B6 gene and the CYP3A4 xenobiotic response element. This chain is Nuclear receptor subfamily 1 group I member 3 (NR1I3), found in Homo sapiens (Human).